The sequence spans 132 residues: Ribosome-binding factor A (132 aa).

Belongs to the RbfA family. Monomer. Binds 30S ribosomal subunits, but not 50S ribosomal subunits or 70S ribosomes.

Its subcellular location is the cytoplasm. One of several proteins that assist in the late maturation steps of the functional core of the 30S ribosomal subunit. Associates with free 30S ribosomal subunits (but not with 30S subunits that are part of 70S ribosomes or polysomes). Required for efficient processing of 16S rRNA. May interact with the 5'-terminal helix region of 16S rRNA. The chain is Ribosome-binding factor A from Caldicellulosiruptor bescii (strain ATCC BAA-1888 / DSM 6725 / KCTC 15123 / Z-1320) (Anaerocellum thermophilum).